The sequence spans 148 residues: NADH-quinone oxidoreductase subunit A (148 aa).

The next 3 helical transmembrane spans lie at 14 to 34 (WAFA…LVGG), 68 to 88 (FYLV…LYAW), and 98 to 118 (VGFV…VYLV).

Belongs to the complex I subunit 3 family. NDH-1 is composed of 13 different subunits. Subunits NuoA, H, J, K, L, M, N constitute the membrane sector of the complex.

It localises to the cell inner membrane. The catalysed reaction is a quinone + NADH + 5 H(+)(in) = a quinol + NAD(+) + 4 H(+)(out). Functionally, NDH-1 shuttles electrons from NADH, via FMN and iron-sulfur (Fe-S) centers, to quinones in the respiratory chain. The immediate electron acceptor for the enzyme in this species is believed to be ubiquinone. Couples the redox reaction to proton translocation (for every two electrons transferred, four hydrogen ions are translocated across the cytoplasmic membrane), and thus conserves the redox energy in a proton gradient. The polypeptide is NADH-quinone oxidoreductase subunit A (Klebsiella pneumoniae subsp. pneumoniae (strain ATCC 700721 / MGH 78578)).